A 229-amino-acid chain; its full sequence is MLDRDGFRPNVGIILLNQRNQVFWGKRIRTHSWQFPQGGIDRGETPEQAMFRELHEEVGLLPPQVRVIARTRDWLRYEVPDRFIRRDARGHYKGQKQIWYLLQLLGHDWDLNLRATNHPEFDAWRWNDYWVPLDVVVEFKRGVYEMALTELARFLPRHEQRNRYLRSGMRTREHESSGQASLARTSSLLVKPGMELPPGASFDPDPQNSVPAPLEALPTLPVPKKPLDA.

The Nudix hydrolase domain maps to 6-149 (GFRPNVGIIL…KRGVYEMALT (144 aa)). Residues 38-59 (GGIDRGETPEQAMFRELHEEVG) carry the Nudix box motif. Residues 191–229 (KPGMELPPGASFDPDPQNSVPAPLEALPTLPVPKKPLDA) form a disordered region. The span at 220–229 (LPVPKKPLDA) shows a compositional bias: pro residues.

This sequence belongs to the Nudix hydrolase family. RppH subfamily. A divalent metal cation is required as a cofactor.

Its function is as follows. Accelerates the degradation of transcripts by removing pyrophosphate from the 5'-end of triphosphorylated RNA, leading to a more labile monophosphorylated state that can stimulate subsequent ribonuclease cleavage. This is RNA pyrophosphohydrolase from Acidovorax ebreus (strain TPSY) (Diaphorobacter sp. (strain TPSY)).